The chain runs to 347 residues: NADH-quinone oxidoreductase subunit H (347 aa).

9 consecutive transmembrane segments (helical) span residues L13 to L33, P50 to F70, G82 to I102, V115 to G135, I161 to V181, F198 to L218, F248 to V268, V286 to V306, and V325 to G345.

This sequence belongs to the complex I subunit 1 family. NDH-1 is composed of 14 different subunits. Subunits NuoA, H, J, K, L, M, N constitute the membrane sector of the complex.

The protein resides in the cell inner membrane. It catalyses the reaction a quinone + NADH + 5 H(+)(in) = a quinol + NAD(+) + 4 H(+)(out). Functionally, NDH-1 shuttles electrons from NADH, via FMN and iron-sulfur (Fe-S) centers, to quinones in the respiratory chain. The immediate electron acceptor for the enzyme in this species is believed to be ubiquinone. Couples the redox reaction to proton translocation (for every two electrons transferred, four hydrogen ions are translocated across the cytoplasmic membrane), and thus conserves the redox energy in a proton gradient. This subunit may bind ubiquinone. The sequence is that of NADH-quinone oxidoreductase subunit H from Brucella abortus (strain 2308).